Reading from the N-terminus, the 503-residue chain is Mitochondrial antiviral-signaling protein (503 aa).

The Cytoplasmic segment spans residues 1–478 (MTFAEDKTYK…HCASSMPWAK (478 aa)). Glycyl lysine isopeptide (Lys-Gly) (interchain with G-Cter in ubiquitin) cross-links involve residues Lys-7 and Lys-10. The CARD domain maps to 10-77 (KYIRDNHSKF…WVEVFIRALQ (68 aa)). The required for interaction with NLRX1 stretch occupies residues 10-77 (KYIRDNHSKF…WVEVFIRALQ (68 aa)). Cys-79 carries S-palmitoyl cysteine lipidation. Residues 119 to 202 (GPSAFAPGHN…HQEQEPELGG (84 aa)) are disordered. The interaction with TRAF2 stretch occupies residues 143 to 147 (PVQDT). The segment covering 145 to 166 (QDTQPPESPVENSEQLLQTNSG) has biased composition (polar residues). Ser-152, Ser-157, Ser-172, Ser-186, and Ser-220 each carry phosphoserine. The tract at residues 153–158 (PVENSE) is interaction with TRAF6 1. The segment covering 178 to 189 (PSPNQQALSPQP) has biased composition (polar residues). Asymmetric dimethylarginine is present on Arg-234. A phosphoserine mark is found at Ser-251 and Ser-256. Residue Lys-302 forms a Glycyl lysine isopeptide (Lys-Gly) (interchain with G-Cter in ubiquitin) linkage. Positions 337–503 (PSRVPASVAK…MLYRSRRLAQ (167 aa)) are interaction with DHX33. A disordered region spans residues 346–398 (KAPANTIPPERNSKQAKETPEGPATKVTTGGNQTGPNSSIRSLHSGPEMSKPG). Residues 356 to 365 (RNSKQAKETP) show a composition bias toward basic and acidic residues. Residues 371 to 387 (KVTTGGNQTGPNSSIRS) are compositionally biased toward polar residues. Ser-384 carries the phosphoserine modification. The short motif at 415 to 418 (LAIS) is the pLxIS motif element. A Phosphoserine; by TBK1 modification is found at Ser-418. Residues 431 to 436 (PEENEY) form an interaction with TRAF6 2 region. Residues 446–466 (SPSADLLGSPEPLATQQPQEE) form a disordered region. A helical transmembrane segment spans residues 479 to 496 (WLGATSALLAVFLAVMLY). The Mitochondrial intermembrane portion of the chain corresponds to 497 to 503 (RSRRLAQ).

Self-associates and polymerizes (via CARD domains) to form 400 nM long three-stranded helical filaments on mitochondria, filament nucleation requires interaction with RIGI whose CARD domains act as a template for filament assembly. Interacts with RIGI, IFIH1/MDA5, TRAF2, TRAF6 and C1QBP. May interact with FADD, RIPK1, IKBKE, CHUK and IKBKB. Interacts (when phosphorylated) with IRF3; following activation and phosphorylation on the pLxIS motif by TBK1, recruits IRF3. Interacts with NLRX1. Interaction with NLRX1 requires the CARD domain. Interacts with PSMA7. Interacts with TRAFD1. Interacts (via C-terminus) with PCBP2 in a complex containing MAVS/IPS1, PCBP2 and ITCH. Interacts with CYLD. Interacts with SRC. Interacts with DHX58/LGP2 and IKBKE. Interacts with STING1. Interacts with IFIT3 (via N-terminus). Interacts with TBK1 only in the presence of IFIT3. Interacts with TTLL12; the interaction prevents MAVS binding to TBK1 and IKBKE. Interacts with MUL1. Interacts with ANKRD17. Interacts with NDFIP1. Interacts with SMURF1; the interaction is mediated by NDFIP1 and leads to MAVS ubiquitination and degradation. Interacts (via C-terminus) with GPATCH3; the interaction is markedly increased upon viral infection. Directly interacts (via CARD domain) with ATG5 and ATG12, either as ATG5 and ATG12 monomers or as ATG12-ATG5 conjugates. Interacts with DHX33 (via the helicase C-terminal domain). Interacts with DDX3X (via C-terminus); this interaction may occur rapidly, but transiently after viral infection. The interaction with DDX3X potentiates MAVS-mediated IFNB induction. Conversely inhibition of this interaction prevents MAVS-mediated IFNB induction. Transiently interacts with TRAF3 early during viral infection. Interacts with CLPB. Interacts with TRAF3IP3. Interacts with TOMM70; the interaction is enhanced by virus infection. Interacts with ZNFX1. Interacts with DHX15. Interacts with N4BP3; this interaction promotes the polyubiquitination of MAVS. Interacts with TAX1BP1; this interaction induces MAVS polyubiquitination. Interacts with NLRP3; promoting NLRP3 recruitment to mitochondria and activation of the NLRP3 inflammasome. Interacts with ECSIT; this interaction bridges RIGI to the MAVS complex at the mitochondrion. Interacts with UBL7; this interaction promotes MAVS 'Lys-27'-linked ubiquitination leading to type I interferon production. Interacts (via transmembrane domain) with SMIM30/MAVI1 (via transmembrane domain); the interaction disrupts MAVS interaction with RIGI and inhibits MAVS aggregation, resulting in the repression of type I interferon signaling and innate immune responses. In terms of processing, following activation, phosphorylated by TBK1 at Ser-418 in the pLxIS motif. The phosphorylated pLxIS motif constitutes an IRF3-binding motif, leading to recruitment of the transcription factor IRF3 to induce type-I interferons and other cytokines. Ubiquitinated. Undergoes 'Lys-48'-linked polyubiquitination catalyzed by ITCH; ITCH-dependent polyubiquitination is mediated by the interaction with PCBP2 and leads to MAVS/IPS1 proteasomal degradation. Ubiquitinated by RNF125, leading to its degradation by the proteasome. Undergoes 'Lys-48'-linked ubiquitination catalyzed by SMURF1. Undergoes 'Lys-48'-linked ubiquitination catalyzed by MARCHF5 at Lys-7, leading to proteasomal degradation. Ubiquitinated via 'Lys-63'-linked ubiquitination at Lys-10 by TRIM31, promoting MAVS polymerization and formation of three-stranded helical filaments on mitochondria. Undergoes 'Lys-63'-linked ubiquitination leading to enhanced interaction between MAVS and TRAF2. Undergoes 'Lys-27'-linked ubiquitination by UBE2N and TRIM21 leading to enhanced interaction between MAVS and TBK1. Deubiquitinated by USP10 leading to attenuation of RIGI-mediated MAVS aggregation and production of type I interferon. Undergoes 'Lys-48'-linked polyubiquitination catalyzed by RNF115 leading to its degradation. Post-translationally, proteolytically cleaved by apoptotic caspases during apoptosis, leading to its inactivation. Cleavage by CASP3 during virus-induced apoptosis inactivates it, preventing cytokine overproduction. In terms of processing, palmitoylated by ZHDDC4. Palmitoylation promotes MAVS stabilization and activation by inhibiting 'Lys-48'- but facilitating 'Lys-63'-linked ubiquitination.

The protein localises to the mitochondrion outer membrane. It localises to the mitochondrion. The protein resides in the peroxisome. Adapter required for innate immune defense against viruses. Acts downstream of DHX33, RIGI and IFIH1/MDA5, which detect intracellular dsRNA produced during viral replication, to coordinate pathways leading to the activation of NF-kappa-B, IRF3 and IRF7, and to the subsequent induction of antiviral cytokines such as IFN-beta and RANTES (CCL5). Peroxisomal and mitochondrial MAVS act sequentially to create an antiviral cellular state. Upon viral infection, peroxisomal MAVS induces the rapid interferon-independent expression of defense factors that provide short-term protection, whereas mitochondrial MAVS activates an interferon-dependent signaling pathway with delayed kinetics, which amplifies and stabilizes the antiviral response. May activate the same pathways following detection of extracellular dsRNA by TLR3. May protect cells from apoptosis. Involved in NLRP3 inflammasome activation by mediating NLRP3 recruitment to mitochondria. This is Mitochondrial antiviral-signaling protein from Mus musculus (Mouse).